The primary structure comprises 505 residues: L-carnitine/gamma-butyrobetaine antiporter (505 aa).

Helical transmembrane passes span 10–30 (IEPK…WLTV), 51–71 (WGWA…WLVF), 92–112 (IFMM…SIEI), 143–163 (GPLP…FFFV), 195–215 (FYLV…TPLV), 231–251 (LDAI…ACGL), 263–283 (SYLS…SFIM), 316–336 (WTVF…IFLA), 347–367 (LCFG…TVLG), 403–423 (LSTA…VTLI), 446–466 (LLVR…LLAL), and 475–495 (AIIA…LSFI).

The protein belongs to the BCCT transporter (TC 2.A.15) family. CaiT subfamily. As to quaternary structure, homotrimer.

The protein resides in the cell inner membrane. It catalyses the reaction 4-(trimethylamino)butanoate(in) + (R)-carnitine(out) = 4-(trimethylamino)butanoate(out) + (R)-carnitine(in). Its pathway is amine and polyamine metabolism; carnitine metabolism. Catalyzes the exchange of L-carnitine for gamma-butyrobetaine. The polypeptide is L-carnitine/gamma-butyrobetaine antiporter (Salmonella choleraesuis (strain SC-B67)).